The sequence spans 311 residues: Pyrimidine-specific ribonucleoside hydrolase RihA (311 aa).

Residue His240 is part of the active site.

This sequence belongs to the IUNH family. RihA subfamily.

Hydrolyzes with equal efficiency cytidine or uridine to ribose and cytosine or uracil, respectively. This is Pyrimidine-specific ribonucleoside hydrolase RihA from Escherichia coli O157:H7.